The following is an 804-amino-acid chain: Phenylalanine--tRNA ligase beta subunit (804 aa).

Residues 38–148 form the tRNA-binding domain; it reads RAAFRAFTIA…ENAPVGTSFA (111 aa). Residues 401–476 form the B5 domain; sequence HTARVIDFPV…RIHGINRIDP (76 aa). Mg(2+) contacts are provided by Asp454, Asp460, Glu463, and Glu464. Residues 710-803 form the FDX-ACB domain; that stretch reads SLFQSLKRDY…VAKQTGGVLR (94 aa).

Belongs to the phenylalanyl-tRNA synthetase beta subunit family. Type 1 subfamily. In terms of assembly, tetramer of two alpha and two beta subunits. It depends on Mg(2+) as a cofactor.

Its subcellular location is the cytoplasm. The catalysed reaction is tRNA(Phe) + L-phenylalanine + ATP = L-phenylalanyl-tRNA(Phe) + AMP + diphosphate + H(+). In Brucella suis biovar 1 (strain 1330), this protein is Phenylalanine--tRNA ligase beta subunit.